The following is a 251-amino-acid chain: Small ribosomal subunit protein uS2B (251 aa).

Position 2 is an N-acetylserine (Ser-2). A compositionally biased stretch (low complexity) spans 214-225 (AVEEASATGATE). Residues 214–251 (AVEEASATGATEEATEEATEETTEATEWAEDNTENATW) are disordered. Acidic residues predominate over residues 226 to 251 (EATEEATEETTEATEWAEDNTENATW).

This sequence belongs to the universal ribosomal protein uS2 family. As to quaternary structure, component of the small ribosomal subunit. Mature ribosomes consist of a small (40S) and a large (60S) subunit. The 40S subunit contains about 33 different proteins and 1 molecule of RNA (18S). The 60S subunit contains about 49 different proteins and 3 molecules of RNA (25S, 5.8S and 5S). Interacts with RPS21.

It is found in the cytoplasm. Functionally, required for the assembly and/or stability of the 40S ribosomal subunit. Required for the processing of the 20S rRNA-precursor to mature 18S rRNA in a late step of the maturation of 40S ribosomal subunits. This is Small ribosomal subunit protein uS2B from Vanderwaltozyma polyspora (strain ATCC 22028 / DSM 70294 / BCRC 21397 / CBS 2163 / NBRC 10782 / NRRL Y-8283 / UCD 57-17) (Kluyveromyces polysporus).